Reading from the N-terminus, the 164-residue chain is Ribosome maturation factor RimM (164 aa).

Residues 93-164 (DSEYYVANLN…FVVIVPPEFI (72 aa)) form the PRC barrel domain.

Belongs to the RimM family. In terms of assembly, binds ribosomal protein uS19.

The protein resides in the cytoplasm. Its function is as follows. An accessory protein needed during the final step in the assembly of 30S ribosomal subunit, possibly for assembly of the head region. Essential for efficient processing of 16S rRNA. May be needed both before and after RbfA during the maturation of 16S rRNA. It has affinity for free ribosomal 30S subunits but not for 70S ribosomes. This Orientia tsutsugamushi (strain Boryong) (Rickettsia tsutsugamushi) protein is Ribosome maturation factor RimM.